Here is a 297-residue protein sequence, read N- to C-terminus: 3'-5' exonuclease eri1 (297 aa).

Residues 4 to 38 (KTPSTVEEIRIALQELGLSTNGNKEKLKRRWKFRE) enclose the SAP domain. One can recognise an Exonuclease domain in the interval 68 to 153 (IVDVEATCEE…EELFIFLRKH (86 aa)). Mg(2+) contacts are provided by Asp70 and Glu72. Glu72 serves as the catalytic Proton acceptor. The AMP site is built by Glu72 and Ala73. Mg(2+) is bound at residue Asp190. The active-site Proton acceptor is the His248. His248 lines the AMP pocket. Asp253 provides a ligand contact to Mg(2+).

Mg(2+) is required as a cofactor.

The protein localises to the cytoplasm. Its function is as follows. RNA exonuclease that acts as a negative regulator of RNA interference (RNAi). Acts by degrading the 3'-overhangs of double-stranded short interfering RNAs (siRNAs). Represses the accumulation of heterochromatic siRNAs leading to negative regulation of the RNAi-mediated heterochromoatin assembly. Also involved in rRNA biogenesis, trimming the 5.8S ribosomal RNA (rRNA) from a slightly longer pre-5.8S RNA in the cytoplasm. The polypeptide is 3'-5' exonuclease eri1 (eri1) (Schizosaccharomyces pombe (strain 972 / ATCC 24843) (Fission yeast)).